Here is a 104-residue protein sequence, read N- to C-terminus: UPF0145 protein DET1617 (104 aa).

Belongs to the UPF0145 family.

The protein is UPF0145 protein DET1617 of Dehalococcoides mccartyi (strain ATCC BAA-2266 / KCTC 15142 / 195) (Dehalococcoides ethenogenes (strain 195)).